A 76-amino-acid polypeptide reads, in one-letter code: Small ribosomal subunit protein bS18 (76 aa).

Belongs to the bacterial ribosomal protein bS18 family. As to quaternary structure, part of the 30S ribosomal subunit. Forms a tight heterodimer with protein bS6.

Its function is as follows. Binds as a heterodimer with protein bS6 to the central domain of the 16S rRNA, where it helps stabilize the platform of the 30S subunit. The polypeptide is Small ribosomal subunit protein bS18 (Aeromonas salmonicida (strain A449)).